The following is a 416-amino-acid chain: Cysteate synthase (416 aa).

Lys104 carries the N6-(pyridoxal phosphate)lysine modification. Residue Asn130 participates in pyridoxal 5'-phosphate binding.

The protein belongs to the threonine synthase family. Cysteate synthase subfamily. In terms of assembly, homotrimer. The cofactor is pyridoxal 5'-phosphate.

It carries out the reaction O-phospho-L-serine + sulfite + H(+) = L-cysteate + phosphate. The protein operates within cofactor biosynthesis; coenzyme M biosynthesis. Is inhibited by AP3 (DL-2-amino-3-phosphonopropionate) and, to a lesser extent, by L-aspartate or AP4 (DL-2-amino-4-phosphonobutyrate). Is also inhibited by EDTA in vitro. Specifically catalyzes the beta-elimination of phosphate from L-phosphoserine and the beta-addition of sulfite to the dehydroalanine intermediate to produce L-cysteate. Does not display threonine synthase activity like the paralog protein ThrC. The polypeptide is Cysteate synthase (Methanosarcina acetivorans (strain ATCC 35395 / DSM 2834 / JCM 12185 / C2A)).